Here is a 248-residue protein sequence, read N- to C-terminus: Proteasome subunit alpha type-7 (248 aa).

An O-linked (GlcNAc) serine glycan is attached at Ser130. Tyr153 carries the phosphotyrosine; by ABL1 and ABL2 modification. N6-acetyllysine is present on Lys227.

This sequence belongs to the peptidase T1A family. As to quaternary structure, the 26S proteasome consists of a 20S proteasome core and two 19S regulatory subunits. The 20S proteasome core is a barrel-shaped complex made of 28 subunits that are arranged in four stacked rings. The two outer rings are each formed by seven alpha subunits, and the two inner rings are formed by seven beta subunits. The proteolytic activity is exerted by three beta-subunits PSMB5, PSMB6 and PSMB7. PSMA7 interacts directly with the PSMG1-PSMG2 heterodimer which promotes 20S proteasome assembly. Interacts with HIF1A. Interacts with RAB7A. Interacts with PRKN. Interacts with ABL1 and ABL2. Interacts with EMAP2. Interacts with MAVS. Post-translationally, phosphorylation by ABL1 or ABL2 leads to an inhibition of proteasomal activity and cell cycle transition blocks. As to expression, detected in liver (at protein level).

The protein resides in the cytoplasm. The protein localises to the nucleus. Its function is as follows. Component of the 20S core proteasome complex involved in the proteolytic degradation of most intracellular proteins. This complex plays numerous essential roles within the cell by associating with different regulatory particles. Associated with two 19S regulatory particles, forms the 26S proteasome and thus participates in the ATP-dependent degradation of ubiquitinated proteins. The 26S proteasome plays a key role in the maintenance of protein homeostasis by removing misfolded or damaged proteins that could impair cellular functions, and by removing proteins whose functions are no longer required. Associated with the PA200 or PA28, the 20S proteasome mediates ubiquitin-independent protein degradation. This type of proteolysis is required in several pathways including spermatogenesis (20S-PA200 complex) or generation of a subset of MHC class I-presented antigenic peptides (20S-PA28 complex). This is Proteasome subunit alpha type-7 (Psma7) from Mus musculus (Mouse).